A 335-amino-acid polypeptide reads, in one-letter code: Zinc finger protein CO3 (335 aa).

Zn(2+) is bound by residues Cys15, Cys18, Cys38, and His43. The B box-type; atypical zinc-finger motif lies at 15-57 (CDSCRSAPCAFYCLADSAALCATCDADVHSVNPLARRHRRVPM). A disordered region spans residues 141 to 179 (AGEKEDASSSKDCSSSHGKSSEGSHEFAVPGEPVPERQG). The 43-residue stretch at 268-310 (REARVHRYREKRKTRRFEKTIRYASRKAYAETRPRIKGRFAKR) folds into the CCT domain.

The protein belongs to the CONSTANS family.

Its subcellular location is the nucleus. Probable transcription factor involved in the regulation of flowering time under short day (SD) conditions. Functions as a repressor of flowering under SD conditions, independently of HD1, EHD1, MADS50 and MADS51. Controls flowering time under SD conditions by negatively regulating the expression of HD3A and FTL. The chain is Zinc finger protein CO3 from Oryza sativa subsp. japonica (Rice).